The following is a 279-amino-acid chain: MAAEAGSAAAGAAYEEERRKRVLENLKHLEDLGIKKMSKSLLEAARLQKSTRASPKPRKKFEVGATEVRRSSRARNSVSYKENFDELNSFLCRRRGSRIRSTEQGRDYTGRVASYEQQQRAFKKAERLQNSLDPENPSFVKTMVRSHVSSCFWLGLPTRFCKLHLPPKEYKMVLEDEEGGEFDSVYIGNRTGLSGGWRGFAMHHNLEDGDSLVFELAEPDRFKIYIIKAVDEDANESEPADEEAIGDKDTSTEDAAEQDDSPNAEPLKGTKRRKLRGRR.

The disordered stretch occupies residues 45–68 (ARLQKSTRASPKPRKKFEVGATEV). Positions 139-230 (FVKTMVRSHV…RFKIYIIKAV (92 aa)) form a DNA-binding region, TF-B3. Acidic residues-rich tracts occupy residues 233-244 (DANESEPADEEA) and 252-262 (TEDAAEQDDSP). The tract at residues 233 to 279 (DANESEPADEEAIGDKDTSTEDAAEQDDSPNAEPLKGTKRRKLRGRR) is disordered. Positions 269–279 (GTKRRKLRGRR) are enriched in basic residues.

It is found in the nucleus. This Oryza sativa subsp. japonica (Rice) protein is B3 domain-containing protein Os05g0481400.